The chain runs to 342 residues: Ribosomal RNA small subunit methyltransferase C (342 aa).

The protein belongs to the methyltransferase superfamily. RsmC family. Monomer.

It localises to the cytoplasm. The enzyme catalyses guanosine(1207) in 16S rRNA + S-adenosyl-L-methionine = N(2)-methylguanosine(1207) in 16S rRNA + S-adenosyl-L-homocysteine + H(+). Its function is as follows. Specifically methylates the guanine in position 1207 of 16S rRNA in the 30S particle. This is Ribosomal RNA small subunit methyltransferase C from Salmonella enteritidis PT4 (strain P125109).